The following is a 374-amino-acid chain: Ribosomal RNA large subunit methyltransferase G (374 aa).

This sequence belongs to the methyltransferase superfamily. RlmG family.

It localises to the cytoplasm. It carries out the reaction guanosine(1835) in 23S rRNA + S-adenosyl-L-methionine = N(2)-methylguanosine(1835) in 23S rRNA + S-adenosyl-L-homocysteine + H(+). Functionally, specifically methylates the guanine in position 1835 (m2G1835) of 23S rRNA. The chain is Ribosomal RNA large subunit methyltransferase G from Pseudomonas putida (strain ATCC 700007 / DSM 6899 / JCM 31910 / BCRC 17059 / LMG 24140 / F1).